Consider the following 457-residue polypeptide: MSPSIWEKCLKYLQNKLSPIEFSMWIRPLKAEFKKNILILYAPNEFSFNWIKDNYIENLKKLLKNFCNINTTPTLMLKICKPKIIQKKFFNELTLKKNILNSKLTYNVNTKLSNIIYSSEINTNYTFQNFTKGQSNQLAFKTIYKIAHNPGKNYFNPLFLYGKSGLGKTHLLHAVANTILKYKNTIKIIYINSENFIQNMITSLKNNTIEEFKKYYRSVNTLLIDDIQFFAYKKHSQEELFHTINALLNRNQQIIITSDQFPQKIHGIETRLKSRFECGLTIRIDPPDLNTRTKILIKKSHIYDINLSYKVAFFIAKNLKSNIRELEGALNKILANSDSKKKIITINFAYKTLQELFSLPKKSITIKNIQKVVSNYYHITIINLLSQCRLKSIVKPRQIAMAISKKLTNKSLSEIGREFNGRNHATVLYACKKIKKLQEKNNNIKKDFLTLLKILSS.

Positions 1–71 are domain I, interacts with DnaA modulators; it reads MSPSIWEKCL…LLKNFCNINT (71 aa). A domain II region spans residues 71-119; sequence TTPTLMLKICKPKIIQKKFFNELTLKKNILNSKLTYNVNTKLSNIIYSS. The segment at 120–337 is domain III, AAA+ region; sequence EINTNYTFQN…GALNKILANS (218 aa). 4 residues coordinate ATP: G165, G167, K168, and T169. The segment at 338–457 is domain IV, binds dsDNA; sequence DSKKKIITIN…FLTLLKILSS (120 aa).

This sequence belongs to the DnaA family. As to quaternary structure, oligomerizes as a right-handed, spiral filament on DNA at oriC.

The protein localises to the cytoplasm. Plays an essential role in the initiation and regulation of chromosomal replication. ATP-DnaA binds to the origin of replication (oriC) to initiate formation of the DNA replication initiation complex once per cell cycle. Binds the DnaA box (a 9 base pair repeat at the origin) and separates the double-stranded (ds)DNA. Forms a right-handed helical filament on oriC DNA; dsDNA binds to the exterior of the filament while single-stranded (ss)DNA is stabiized in the filament's interior. The ATP-DnaA-oriC complex binds and stabilizes one strand of the AT-rich DNA unwinding element (DUE), permitting loading of DNA polymerase. After initiation quickly degrades to an ADP-DnaA complex that is not apt for DNA replication. Binds acidic phospholipids. The chain is Chromosomal replication initiator protein DnaA from Buchnera aphidicola subsp. Baizongia pistaciae (strain Bp).